A 627-amino-acid chain; its full sequence is (+)-sabinene synthase, chloroplastic (627 aa).

Residues 1 to 46 constitute a chloroplast transit peptide; that stretch reads MSVISIVPLASNSCLYKSLMSSTHELKALCRPIATLGMCRRGKSVM. Mg(2+) contacts are provided by Asp378, Asp382, and Asp530. Residues 378–382 carry the DDXXD motif motif; it reads DDIYD.

It belongs to the terpene synthase family. Tpsd subfamily. In terms of assembly, monomer. It depends on Mg(2+) as a cofactor.

It localises to the plastid. It is found in the chloroplast. It catalyses the reaction (2E)-geranyl diphosphate = (1R,5R)-sabinene + diphosphate. It participates in terpene metabolism; oleoresin biosynthesis. In terms of biological role, terpene synthase (TPS) involved in defensive oleoresin formation in conifers in response to insect attack (e.g. white pine weevil P.strobi) or other injury. Produces (+)-sabinene from geranyl diphosphate, but has no activity with geranylgeranyl diphosphate or farnesyl diphosphate. This chain is (+)-sabinene synthase, chloroplastic (TPS-sab), found in Picea sitchensis (Sitka spruce).